An 838-amino-acid polypeptide reads, in one-letter code: Shutoff protein (838 aa).

Residues 1–102 (MEDQHSAASE…EQEEDSPDRY (102 aa)) are disordered. The span at 18–35 (TLPPPPPPPPPPTSPPPS) shows a compositional bias: pro residues. The segment covering 52 to 65 (TCSSSSSSSASSEC) has biased composition (low complexity). Residues 291–353 (LMQTLLVRRA…ACMVTVQLHC (63 aa)) form a binding to host EIF4G region. The RRM domain maps to 356–474 (TFLTSREMVR…SLWTGFDERT (119 aa)). Phosphotyrosine; by host is present on residues Tyr-373 and Tyr-690. Residues 693-838 (PHTGEELNTA…QELRRPQRGS (146 aa)) form a disordered region. Over residues 701 to 710 (TAAPSTAHHA) the composition is skewed to low complexity. 2 stretches are compositionally biased toward basic and acidic residues: residues 737 to 746 (SYADRVRSEL) and 770 to 787 (HSRDAARRRGSQQRDQRQ). Low complexity predominate over residues 813–829 (QALLHQQQQQQEHQPAQ).

It belongs to the adenoviridae shutoff protein family. As to quaternary structure, monomer. Interacts with hexon protein; this interaction allows chaperoning and trimerization of hexon proteins. Interacts (via N-terminus) with host initiation factor EIF4G (via C-terminus). Interacts (via RRM domain) with viral mRNAs that contain the tripartite leader; this interaction allows ribosome shunting and expression of viral late mRNAs. Might be cleaved by the viral protease. In terms of processing, phosphorylated. Tyrosine phosphorylation enhances preferential binding to tripartite leader mRNAs and allows ribosome shunting. Post-translationally, methylated. Asymmetric dimethylation by host PRMT1 of the Arg/Gly-rich region may regulate shutoff protein binding to hexon and promote the capsid assembly in the nucleus.

The protein localises to the host cytoplasm. Protein that inhibits host translation while promoting late viral translation by ribosome shunting. Blocks host cap-dependent translation by binding to eIF4G, displacing MKNK1 from cap initiation complexes and preventing EIF4E phosphorylation. Binds to the tripartite leader sequence of viral late mRNAs and recruits host eIF4G, PABPC1/poly-A binding protein and 40S ribosomes subunits on viral mRNAs, allowing ribosome shunting and efficient translation of late viral mRNAs even though conventional translation via ribosome scanning from the cap has been shut off in the host cell. During assembly, acts as a chaperone protein that helps hexon proteins assembly into trimers. This is Shutoff protein from Porcine adenovirus A serotype 3 (PAdV-3).